A 335-amino-acid chain; its full sequence is Putative SWIB domain-containing protein R508 (335 aa).

The segment covering 1-12 (MSKRVTSSKKSK) has biased composition (basic residues). The interval 1–182 (MSKRVTSSKK…NKKSPKKLLN (182 aa)) is disordered. Low complexity predominate over residues 24 to 33 (KNLSKTSKSV). Residues 60-75 (NIGGSKSSRTYNSEGS) are compositionally biased toward polar residues. Over residues 83–109 (SSKDSKVIKKNKQKVESSDSEKHSENK) the composition is skewed to basic and acidic residues. A compositionally biased stretch (basic residues) spans 110-126 (SHKKSSKSSSISRKKPI). Residues 163–173 (KGEDNNDEKQN) are compositionally biased toward basic and acidic residues. A coiled-coil region spans residues 181-217 (LNEKKISSESFDDKLNELREELRENYIRQKKIMNDIK). An SWIB/MDM2 domain is found at 244-326 (GFNKPQTVPQ…QTWLKKVYNE (83 aa)).

This is Putative SWIB domain-containing protein R508 from Acanthamoeba polyphaga mimivirus (APMV).